Consider the following 646-residue polypeptide: Protein kinase YegI (646 aa).

The Protein kinase domain occupies 13-300; that stretch reads VTPGRELGKG…KAWVAALDLL (288 aa). ATP-binding positions include 19–27 and Lys39; that span reads LGKGGEGAV. Asp141 (proton acceptor) is an active-site residue.

Post-translationally, autophosphorylated.

Its function is as follows. Probable serine/threonine kinase. This Escherichia coli O157:H7 protein is Protein kinase YegI (yegI).